Reading from the N-terminus, the 241-residue chain is Probable porphobilinogen deaminase (241 aa).

The protein belongs to the HMBS family.

It carries out the reaction 4 porphobilinogen + H2O = hydroxymethylbilane + 4 NH4(+). It functions in the pathway porphyrin-containing compound metabolism; protoporphyrin-IX biosynthesis; coproporphyrinogen-III from 5-aminolevulinate: step 2/4. Functionally, tetrapolymerization of the monopyrrole PBG into the hydroxymethylbilane pre-uroporphyrinogen in several discrete steps. This is Probable porphobilinogen deaminase (hemC) from Chlamydia trachomatis serovar D (strain ATCC VR-885 / DSM 19411 / UW-3/Cx).